A 526-amino-acid polypeptide reads, in one-letter code: GMP synthase [glutamine-hydrolyzing] (526 aa).

The region spanning 9–208 (RILILDFGSQ…LVNICGCKQL (200 aa)) is the Glutamine amidotransferase type-1 domain. C86 functions as the Nucleophile in the catalytic mechanism. Active-site residues include H182 and E184. The GMPS ATP-PPase domain maps to 209–401 (WTPGRIIEDA…LGLPYDMVYR (193 aa)). 236-242 (SGGVDSS) serves as a coordination point for ATP.

As to quaternary structure, homodimer.

The enzyme catalyses XMP + L-glutamine + ATP + H2O = GMP + L-glutamate + AMP + diphosphate + 2 H(+). It functions in the pathway purine metabolism; GMP biosynthesis; GMP from XMP (L-Gln route): step 1/1. Its function is as follows. Catalyzes the synthesis of GMP from XMP. The protein is GMP synthase [glutamine-hydrolyzing] of Hahella chejuensis (strain KCTC 2396).